A 581-amino-acid chain; its full sequence is Proteasome-associated ATPase (581 aa).

The segment at 1-28 (MTSSDLTQRKGLTMSDSTPDTPRSTPED) is disordered. Positions 14–24 (MSDSTPDTPRS) are enriched in polar residues. The stretch at 27–66 (EDAARRLAVLSAQNERLAQVLGEARGKIVELQQQIEEFAK) forms a coiled coil. ATP is bound at residue 248–253 (GCGKTL). The segment at 561-581 (GSGRSAAGRTIETATSTGQYL) is disordered. The span at 572-581 (ETATSTGQYL) shows a compositional bias: polar residues. Positions 580–581 (YL) are docks into pockets in the proteasome alpha-ring.

This sequence belongs to the AAA ATPase family. Homohexamer. Assembles into a hexameric ring structure that caps the 20S proteasome core. Strongly interacts with the prokaryotic ubiquitin-like protein Pup through a hydrophobic interface; the interacting region of ARC lies in its N-terminal coiled-coil domain. There is one Pup binding site per ARC hexamer ring. Upon ATP-binding, the C-terminus of ARC interacts with the alpha-rings of the proteasome core, possibly by binding to the intersubunit pockets.

It participates in protein degradation; proteasomal Pup-dependent pathway. Functionally, ATPase which is responsible for recognizing, binding, unfolding and translocation of pupylated proteins into the bacterial 20S proteasome core particle. May be essential for opening the gate of the 20S proteasome via an interaction with its C-terminus, thereby allowing substrate entry and access to the site of proteolysis. Thus, the C-termini of the proteasomal ATPase may function like a 'key in a lock' to induce gate opening and therefore regulate proteolysis. This chain is Proteasome-associated ATPase, found in Sanguibacter keddieii (strain ATCC 51767 / DSM 10542 / NCFB 3025 / ST-74).